Here is a 126-residue protein sequence, read N- to C-terminus: Cystatin-like cysteine protease inhibitor EPIC1 (126 aa).

A signal peptide spans 1-21; sequence MTFLRPILALLAATALVTTSA. N46 is a glycosylation site (N-linked (GlcNAc...) asparagine). The Secondary area of contact motif lies at 69–73; that stretch reads QVVSG.

This sequence belongs to the cystatin family. As to quaternary structure, interacts with the host papain-like cysteine protease RCR3. Interacts with the host papain-like cysteine protease C14.

Its subcellular location is the secreted. Secreted effector that interacts with and inhibits the pathogenesis-related papain-like cysteine proteases C14 and RCR3 of host plants. Inhibition of host proteases by a pathogen extracellular protease inhibitor forms a specific type of defense-counterdefense mechanism between plants and microbial pathogens. The sequence is that of Cystatin-like cysteine protease inhibitor EPIC1 from Phytophthora infestans (Potato late blight agent).